A 600-amino-acid chain; its full sequence is ATP-dependent lipid A-core flippase (600 aa).

The next 4 membrane-spanning stretches (helical) occupy residues 26-46 (VGIFLLSIIGFVIFASTQPML), 82-102 (LLIVLIAAWQGLGSFLGNYFL), 167-187 (VFLFIYLLMMNWKLTLVMLAI), and 266-286 (PMLQLVIYSAMAVLMFLVLFL). Residues 30–321 (LLSIIGFVIF…LSEVSSTIQK (292 aa)) enclose the ABC transmembrane type-1 domain. One can recognise an ABC transporter domain in the interval 353 to 589 (LEVKNLSFFY…NGYYARLHAM (237 aa)). 387–394 (GRSGSGKS) serves as a coordination point for ATP.

The protein belongs to the ABC transporter superfamily. Lipid exporter (TC 3.A.1.106) family. As to quaternary structure, homodimer.

It is found in the cell inner membrane. It catalyses the reaction ATP + H2O + lipid A-core oligosaccharideSide 1 = ADP + phosphate + lipid A-core oligosaccharideSide 2.. Its function is as follows. Involved in lipopolysaccharide (LPS) biosynthesis. Translocates lipid A-core from the inner to the outer leaflet of the inner membrane. Transmembrane domains (TMD) form a pore in the inner membrane and the ATP-binding domain (NBD) is responsible for energy generation. The polypeptide is ATP-dependent lipid A-core flippase (Pseudomonas savastanoi pv. phaseolicola (strain 1448A / Race 6) (Pseudomonas syringae pv. phaseolicola (strain 1448A / Race 6))).